Consider the following 39-residue polypeptide: Non-specific lipid-transfer protein (39 aa).

The protein belongs to the plant LTP family.

Its function is as follows. Plant non-specific lipid-transfer proteins transfer phospholipids as well as galactolipids across membranes. May play a role in wax or cutin deposition in the cell walls of expanding epidermal cells and certain secretory tissues. This Musa acuminata (Banana) protein is Non-specific lipid-transfer protein.